The following is an 867-amino-acid chain: Armadillo repeat-containing protein 2 (867 aa).

Disordered stretches follow at residues 1–115 (MLSP…CFSF) and 214–252 (TSLPSHLKNGGDQGKRHARASSCPSSSDLSRLQTKAVPK). 3 stretches are compositionally biased toward polar residues: residues 18–28 (PSVSKQKTSAE), 40–50 (VRTQRPFTPQE), and 60–69 (SSRTSENRPP). Composition is skewed to low complexity over residues 70–81 (SSFSLHASSFES) and 234–243 (SSCPSSSDLS). 12 ARM repeats span residues 262 to 301 (IEVDEVFWNTRIVPILRELEKEENIETVCAACTQLHHALE), 304 to 344 (NMLG…ALKV), 363 to 403 (EKND…SIKF), 408 to 449 (LGFL…HLLV), 462 to 503 (SLVR…KLTS), 506 to 547 (DCCT…NLTA), 551 to 589 (QAREQFSKEKGSIQTLLSLFQTFHQLDLHSQKPVGQRGE), 591 to 616 (HRAQRPPSEAEDVLIKLTRVLANIAI), 619 to 662 (GVGP…NLSY), 664 to 705 (QVKN…NLSQ), 707 to 746 (HDVCDFIVQNNVHRFMMALLDAQHQDICFSACGVLLNLTV), and 748 to 790 (KDKR…NFSE).

As to expression, expressed at higher level in testis.

Required for sperm flagellum axoneme organization and function. Involved in axonemal central pair complex assembly and/or stability. The sequence is that of Armadillo repeat-containing protein 2 from Homo sapiens (Human).